Here is a 340-residue protein sequence, read N- to C-terminus: Glucokinase (340 aa).

17–22 serves as a coordination point for ATP; that stretch reads GDIGGT.

Belongs to the bacterial glucokinase family.

The protein resides in the cytoplasm. The catalysed reaction is D-glucose + ATP = D-glucose 6-phosphate + ADP + H(+). The polypeptide is Glucokinase (Agrobacterium fabrum (strain C58 / ATCC 33970) (Agrobacterium tumefaciens (strain C58))).